Consider the following 450-residue polypeptide: MRRHAIILAAGKGTRMKSKKYKVLHEVAGKPMVEHVLESVKGSGVDQVVTIVGHGAESVKGHLGERSLYSFQEEQLGTAHAVQMAKSHLEDKEGTTIVVCGDTPLITKETLETLIAHHEDANAQATVLSASIQQPYGYGRIVRNASGRLERIVEEKDATQAEKDINEISSGIFAFNNKTLFEKLTQVKNDNAQGEYYLPDVLSLILNDGGIVEVYRTNDVEEIMGVNDRVMLSQAEKAMQRRTNHYHMLNGVTIIDPDSTYIGPDVTIGSDTVIEPGVRINGRTEIGEDVVIGQYSEINNSTIENGACIQQSVVNDASVGANTKVGPFAQLRPGAQLGADVKVGNFVEIKKADLKDGAKVSHLSYIGDAVIGERTNIGCGTITVNYDGENKFKTIVGKDSFVGCNVNLVAPVTIGDDVLVAAGSTITDDVPNDSLAVARARQTTKEGYRK.

A pyrophosphorylase region spans residues M1–R229. Residues L8 to G11, K22, Q72, and G77 to T78 contribute to the UDP-N-acetyl-alpha-D-glucosamine site. D102 serves as a coordination point for Mg(2+). Residues G139, E154, and N227 each coordinate UDP-N-acetyl-alpha-D-glucosamine. N227 is a binding site for Mg(2+). The tract at residues V230–N250 is linker. An N-acetyltransferase region spans residues G251–K450. UDP-N-acetyl-alpha-D-glucosamine is bound by residues R332 and K350. H362 (proton acceptor) is an active-site residue. Y365 and N376 together coordinate UDP-N-acetyl-alpha-D-glucosamine. Acetyl-CoA is bound by residues N385–Y386, A422, and R439.

The protein in the N-terminal section; belongs to the N-acetylglucosamine-1-phosphate uridyltransferase family. It in the C-terminal section; belongs to the transferase hexapeptide repeat family. In terms of assembly, homotrimer. The cofactor is Mg(2+).

It is found in the cytoplasm. The catalysed reaction is alpha-D-glucosamine 1-phosphate + acetyl-CoA = N-acetyl-alpha-D-glucosamine 1-phosphate + CoA + H(+). The enzyme catalyses N-acetyl-alpha-D-glucosamine 1-phosphate + UTP + H(+) = UDP-N-acetyl-alpha-D-glucosamine + diphosphate. It functions in the pathway nucleotide-sugar biosynthesis; UDP-N-acetyl-alpha-D-glucosamine biosynthesis; N-acetyl-alpha-D-glucosamine 1-phosphate from alpha-D-glucosamine 6-phosphate (route II): step 2/2. Its pathway is nucleotide-sugar biosynthesis; UDP-N-acetyl-alpha-D-glucosamine biosynthesis; UDP-N-acetyl-alpha-D-glucosamine from N-acetyl-alpha-D-glucosamine 1-phosphate: step 1/1. The protein operates within bacterial outer membrane biogenesis; LPS lipid A biosynthesis. Its function is as follows. Catalyzes the last two sequential reactions in the de novo biosynthetic pathway for UDP-N-acetylglucosamine (UDP-GlcNAc). The C-terminal domain catalyzes the transfer of acetyl group from acetyl coenzyme A to glucosamine-1-phosphate (GlcN-1-P) to produce N-acetylglucosamine-1-phosphate (GlcNAc-1-P), which is converted into UDP-GlcNAc by the transfer of uridine 5-monophosphate (from uridine 5-triphosphate), a reaction catalyzed by the N-terminal domain. The polypeptide is Bifunctional protein GlmU (Staphylococcus aureus (strain USA300)).